Consider the following 651-residue polypeptide: DNA ligase (651 aa).

Residues Asp-32 to Asp-36, Ser-75 to Leu-76, and Glu-106 contribute to the NAD(+) site. The active-site N6-AMP-lysine intermediate is the Lys-108. NAD(+) is bound by residues Arg-129, Glu-164, Lys-271, and Lys-295. 4 residues coordinate Zn(2+): Cys-389, Cys-392, Cys-405, and Cys-411. Residues Ser-575–Cys-651 enclose the BRCT domain.

This sequence belongs to the NAD-dependent DNA ligase family. LigA subfamily. Mg(2+) is required as a cofactor. The cofactor is Mn(2+).

It catalyses the reaction NAD(+) + (deoxyribonucleotide)n-3'-hydroxyl + 5'-phospho-(deoxyribonucleotide)m = (deoxyribonucleotide)n+m + AMP + beta-nicotinamide D-nucleotide.. Functionally, DNA ligase that catalyzes the formation of phosphodiester linkages between 5'-phosphoryl and 3'-hydroxyl groups in double-stranded DNA using NAD as a coenzyme and as the energy source for the reaction. It is essential for DNA replication and repair of damaged DNA. The chain is DNA ligase from Wolbachia pipientis subsp. Culex pipiens (strain wPip).